Reading from the N-terminus, the 511-residue chain is Bifunctional purine biosynthesis protein PurH (511 aa).

Residues 1–145 (MKKRALVSVS…KNHKFVSVIV (145 aa)) enclose the MGS-like domain.

Belongs to the PurH family.

It carries out the reaction (6R)-10-formyltetrahydrofolate + 5-amino-1-(5-phospho-beta-D-ribosyl)imidazole-4-carboxamide = 5-formamido-1-(5-phospho-D-ribosyl)imidazole-4-carboxamide + (6S)-5,6,7,8-tetrahydrofolate. The enzyme catalyses IMP + H2O = 5-formamido-1-(5-phospho-D-ribosyl)imidazole-4-carboxamide. Its pathway is purine metabolism; IMP biosynthesis via de novo pathway; 5-formamido-1-(5-phospho-D-ribosyl)imidazole-4-carboxamide from 5-amino-1-(5-phospho-D-ribosyl)imidazole-4-carboxamide (10-formyl THF route): step 1/1. It participates in purine metabolism; IMP biosynthesis via de novo pathway; IMP from 5-formamido-1-(5-phospho-D-ribosyl)imidazole-4-carboxamide: step 1/1. In Bacillus cytotoxicus (strain DSM 22905 / CIP 110041 / 391-98 / NVH 391-98), this protein is Bifunctional purine biosynthesis protein PurH.